The primary structure comprises 63 residues: Large ribosomal subunit protein bL35 (63 aa).

It belongs to the bacterial ribosomal protein bL35 family.

In Finegoldia magna (strain ATCC 29328 / DSM 20472 / WAL 2508) (Peptostreptococcus magnus), this protein is Large ribosomal subunit protein bL35.